Here is a 382-residue protein sequence, read N- to C-terminus: GDP-mannose transporter (382 aa).

Topologically, residues 1–40 (MADDKKTNEYTIEMDKLDHGNKDFEAPAPAVRPRGPPVAQ) are cytoplasmic. A helical membrane pass occupies residues 41–61 (LANNPILPVLAYCGSSILMTV). The Lumenal segment spans residues 62–71 (MNKYVLSGRD). A helical transmembrane segment spans residues 72-92 (FNLNFFLLCVQSIVCIVAIQT). The Cytoplasmic portion of the chain corresponds to 93 to 110 (CKVSKLITYRDFNSDEAK). The helical transmembrane segment at 111 to 127 (KWFPITLLLIGMIYTGS) threads the bilayer. Residues 128–134 (KALQYLS) lie on the Lumenal side of the membrane. Residues 135 to 151 (IPVYTIFKNLTIILIAY) form a helical membrane-spanning segment. Topologically, residues 152–160 (GEVLWFGGS) are cytoplasmic. The chain crosses the membrane as a helical span at residues 161 to 182 (VTGLTLFSFGLMVLSSIIAAWA). At 183-200 (DIKHAVESSGDATAKVST) the chain is on the lumenal side. The chain crosses the membrane as a helical span at residues 201–221 (LNAGYIWMLINCLCTSSYVLG). At 222–233 (MRKRIKLTNFKD) the chain is on the cytoplasmic side. Residues 234–254 (FDTMFYNNLLSIPVLLVLTFL) traverse the membrane as a helical segment. The Lumenal segment spans residues 255-274 (MEDWSSANIARNFPSTDRNG). Residues 275 to 295 (ILFAMILSGLSSVFISYTSAW) form a helical membrane-spanning segment. Residues 296-303 (CVRVTSST) lie on the Cytoplasmic side of the membrane. The chain crosses the membrane as a helical span at residues 304-324 (TYSMVGALNKLPIALSGLIFF). Residues 325–327 (DAP) are Lumenal-facing. A helical membrane pass occupies residues 328 to 348 (VTFPSVSAIVVGFISGIVYAV). Topologically, residues 349–382 (AKIKQSAKPKTGVLPMSNPPVSASSQSMRDSLRS) are cytoplasmic. Positions 358–382 (KTGVLPMSNPPVSASSQSMRDSLRS) are disordered. Positions 367–382 (PPVSASSQSMRDSLRS) are enriched in polar residues.

This sequence belongs to the TPT transporter family. SLC35D subfamily. As to quaternary structure, homooligomer.

It localises to the golgi apparatus membrane. The protein localises to the cytoplasmic vesicle membrane. The protein resides in the endoplasmic reticulum membrane. Its function is as follows. Involved in the import of GDP-mannose from the cytoplasm into the Golgi lumen. This chain is GDP-mannose transporter (gmt1), found in Aspergillus fumigatus (strain CBS 144.89 / FGSC A1163 / CEA10) (Neosartorya fumigata).